We begin with the raw amino-acid sequence, 119 residues long: Holo-[acyl-carrier-protein] synthase (119 aa).

Residues Asp7 and Glu53 each coordinate Mg(2+).

This sequence belongs to the P-Pant transferase superfamily. AcpS family. Mg(2+) serves as cofactor.

Its subcellular location is the cytoplasm. It catalyses the reaction apo-[ACP] + CoA = holo-[ACP] + adenosine 3',5'-bisphosphate + H(+). In terms of biological role, transfers the 4'-phosphopantetheine moiety from coenzyme A to a Ser of acyl-carrier-protein. This chain is Holo-[acyl-carrier-protein] synthase, found in Dehalococcoides mccartyi (strain ATCC BAA-2266 / KCTC 15142 / 195) (Dehalococcoides ethenogenes (strain 195)).